A 321-amino-acid polypeptide reads, in one-letter code: uncharacterized protein (321 aa).

It belongs to the NAD(P)-dependent epimerase/dehydratase family.

This is an uncharacterized protein from Staphylococcus aureus (strain COL).